The primary structure comprises 140 residues: Nucleoside diphosphate kinase (140 aa).

ATP contacts are provided by K11, F59, R87, T93, R104, and N114. H117 serves as the catalytic Pros-phosphohistidine intermediate.

It belongs to the NDK family. Homotetramer. It depends on Mg(2+) as a cofactor.

It is found in the cytoplasm. It catalyses the reaction a 2'-deoxyribonucleoside 5'-diphosphate + ATP = a 2'-deoxyribonucleoside 5'-triphosphate + ADP. The catalysed reaction is a ribonucleoside 5'-diphosphate + ATP = a ribonucleoside 5'-triphosphate + ADP. Functionally, major role in the synthesis of nucleoside triphosphates other than ATP. The ATP gamma phosphate is transferred to the NDP beta phosphate via a ping-pong mechanism, using a phosphorylated active-site intermediate. The chain is Nucleoside diphosphate kinase from Rickettsia prowazekii (strain Madrid E).